The primary structure comprises 227 residues: DNA repair protein RecO (227 aa).

It belongs to the RecO family.

In terms of biological role, involved in DNA repair and RecF pathway recombination. The polypeptide is DNA repair protein RecO (Pseudomonas savastanoi pv. phaseolicola (strain 1448A / Race 6) (Pseudomonas syringae pv. phaseolicola (strain 1448A / Race 6))).